A 194-amino-acid polypeptide reads, in one-letter code: Peptidyl-tRNA hydrolase (194 aa).

Y17 lines the tRNA pocket. Catalysis depends on H22, which acts as the Proton acceptor. The tRNA site is built by Y68, N70, and N116.

It belongs to the PTH family. Monomer.

The protein resides in the cytoplasm. It carries out the reaction an N-acyl-L-alpha-aminoacyl-tRNA + H2O = an N-acyl-L-amino acid + a tRNA + H(+). Hydrolyzes ribosome-free peptidyl-tRNAs (with 1 or more amino acids incorporated), which drop off the ribosome during protein synthesis, or as a result of ribosome stalling. In terms of biological role, catalyzes the release of premature peptidyl moieties from peptidyl-tRNA molecules trapped in stalled 50S ribosomal subunits, and thus maintains levels of free tRNAs and 50S ribosomes. The protein is Peptidyl-tRNA hydrolase of Pseudomonas fluorescens (strain ATCC BAA-477 / NRRL B-23932 / Pf-5).